The chain runs to 383 residues: Large ribosomal subunit protein uL2m (383 aa).

Disordered regions lie at residues 97–122 (FPKK…GGGH) and 322–357 (MNAN…YKTR). 2 stretches are compositionally biased toward basic residues: residues 106-122 (GRNH…GGGH) and 330-340 (GGGRGKSKGNR).

The protein belongs to the universal ribosomal protein uL2 family. In terms of assembly, component of the mitochondrial large ribosomal subunit (mt-LSU). Mature N.crassa 74S mitochondrial ribosomes consist of a small (37S) and a large (54S) subunit. The 37S small subunit contains a 16S ribosomal RNA (16S mt-rRNA) and 32 different proteins. The 54S large subunit contains a 23S rRNA (23S mt-rRNA) and 42 different proteins.

The protein localises to the mitochondrion. Component of the mitochondrial ribosome (mitoribosome), a dedicated translation machinery responsible for the synthesis of mitochondrial genome-encoded proteins, including at least some of the essential transmembrane subunits of the mitochondrial respiratory chain. The mitoribosomes are attached to the mitochondrial inner membrane and translation products are cotranslationally integrated into the membrane. The protein is Large ribosomal subunit protein uL2m (rml2) of Neurospora crassa (strain ATCC 24698 / 74-OR23-1A / CBS 708.71 / DSM 1257 / FGSC 987).